The primary structure comprises 485 residues: Glutamyl-tRNA(Gln) amidotransferase subunit A (485 aa).

Residues lysine 78 and serine 153 each act as charge relay system in the active site. Catalysis depends on serine 177, which acts as the Acyl-ester intermediate.

Belongs to the amidase family. GatA subfamily. Heterotrimer of A, B and C subunits.

The enzyme catalyses L-glutamyl-tRNA(Gln) + L-glutamine + ATP + H2O = L-glutaminyl-tRNA(Gln) + L-glutamate + ADP + phosphate + H(+). Its function is as follows. Allows the formation of correctly charged Gln-tRNA(Gln) through the transamidation of misacylated Glu-tRNA(Gln) in organisms which lack glutaminyl-tRNA synthetase. The reaction takes place in the presence of glutamine and ATP through an activated gamma-phospho-Glu-tRNA(Gln). The chain is Glutamyl-tRNA(Gln) amidotransferase subunit A from Bacillus cereus (strain ZK / E33L).